Reading from the N-terminus, the 344-residue chain is tRNA N6-adenosine threonylcarbamoyltransferase (344 aa).

2 residues coordinate Fe cation: His119 and His123. Substrate-binding positions include 141–145 (VVSGG), Asp174, Gly187, Asp191, and Asn280. Asp310 is a binding site for Fe cation.

Belongs to the KAE1 / TsaD family. Fe(2+) is required as a cofactor.

It localises to the cytoplasm. It catalyses the reaction L-threonylcarbamoyladenylate + adenosine(37) in tRNA = N(6)-L-threonylcarbamoyladenosine(37) in tRNA + AMP + H(+). Its function is as follows. Required for the formation of a threonylcarbamoyl group on adenosine at position 37 (t(6)A37) in tRNAs that read codons beginning with adenine. Is involved in the transfer of the threonylcarbamoyl moiety of threonylcarbamoyl-AMP (TC-AMP) to the N6 group of A37, together with TsaE and TsaB. TsaD likely plays a direct catalytic role in this reaction. The polypeptide is tRNA N6-adenosine threonylcarbamoyltransferase (Listeria innocua serovar 6a (strain ATCC BAA-680 / CLIP 11262)).